Consider the following 950-residue polypeptide: Glycine dehydrogenase (decarboxylating) (950 aa).

N6-(pyridoxal phosphate)lysine is present on lysine 698.

It belongs to the GcvP family. As to quaternary structure, the glycine cleavage system is composed of four proteins: P, T, L and H. The cofactor is pyridoxal 5'-phosphate.

The enzyme catalyses N(6)-[(R)-lipoyl]-L-lysyl-[glycine-cleavage complex H protein] + glycine + H(+) = N(6)-[(R)-S(8)-aminomethyldihydrolipoyl]-L-lysyl-[glycine-cleavage complex H protein] + CO2. Its function is as follows. The glycine cleavage system catalyzes the degradation of glycine. The P protein binds the alpha-amino group of glycine through its pyridoxal phosphate cofactor; CO(2) is released and the remaining methylamine moiety is then transferred to the lipoamide cofactor of the H protein. This is Glycine dehydrogenase (decarboxylating) from Neisseria meningitidis serogroup A / serotype 4A (strain DSM 15465 / Z2491).